Reading from the N-terminus, the 539-residue chain is Inositol 1,4,5-trisphosphate receptor-interacting protein (539 aa).

A signal peptide spans 1–24 (MQGAIARVCMVVVAAILNHPLLFP). The Extracellular portion of the chain corresponds to 25–71 (NENTTVPEQDEDLLARMKEHQEKLEAEQKRLEQEISQNETSVIGDQD). Residues Asn-27 and Asn-62 are each glycosylated (N-linked (GlcNAc...) asparagine). A coiled-coil region spans residues 32 to 68 (EQDEDLLARMKEHQEKLEAEQKRLEQEISQNETSVIG). The chain crosses the membrane as a helical span at residues 72–92 (GYGWYFWSALCLVIFFTIEVC). Over 93–539 (RQDLISAEIP…RHEFSSAEQI (447 aa)) the chain is Cytoplasmic.

It belongs to the ITPRIP family.

Its subcellular location is the cell membrane. The protein localises to the nucleus outer membrane. Its function is as follows. Enhances Ca(2+)-mediated inhibition of inositol 1,4,5-triphosphate receptor (ITPR) Ca(2+) release. This is Inositol 1,4,5-trisphosphate receptor-interacting protein (itprip) from Danio rerio (Zebrafish).